The chain runs to 147 residues: uncharacterized protein (147 aa).

This sequence to B.subtilis XkdM.

This is an uncharacterized protein from Bacillus subtilis (strain 168).